A 242-amino-acid chain; its full sequence is Small ribosomal subunit protein uS2 (242 aa).

This sequence belongs to the universal ribosomal protein uS2 family.

The protein is Small ribosomal subunit protein uS2 of Shewanella baltica (strain OS223).